We begin with the raw amino-acid sequence, 397 residues long: Torsin-3A (397 aa).

The signal sequence occupies residues 1-25 (MLRGPWRQLWLFFLLLLPGAPEPRG). N-linked (GlcNAc...) asparagine glycosylation is present at asparagine 122. 167–174 (GWSGTGKN) is a binding site for ATP.

It belongs to the ClpA/ClpB family. Torsin subfamily. As to quaternary structure, may not form homohexamers. In terms of processing, N-glycosylated. As to expression, ubiquitously expressed. Highest expression in stomach, salivary glands and lymph nodes. Isoform 2 is expressed in placenta.

It is found in the cytoplasm. It localises to the endoplasmic reticulum lumen. This chain is Torsin-3A (TOR3A), found in Homo sapiens (Human).